The primary structure comprises 455 residues: MHILVVGVDYKSAPIEIREKISFQPDELAEAMLRLKGEKSVLENIIVSTCNRTEIYAVVDQLHTGRYYIKTFLSEWFSLPKEELSPFLKFYESDAAIEHLFRVACGLDSMVIGETQILGQVRSSFKTAQAEKTIGTIFNELFKQAVTVGKRTHAETDIGANAVSVSYAAVELAKKIFGSLSNKHILILGAGKMGELAAENLHGQGIGKVTVINRTFLKAKALADRFSGEARSLNQLEHALAEADILISSTGASDFVVSKEMMERAGRQRKGRPLFMVDIAVPRDLDPALNDLEGVFLYDIDDLEGIVEANLQERRETAEKVELFIEAAIVEFKQWLNTLGVVPVISALREKALSIQSDTMQSIERKLPHLTVREKKLLSKHTKSIINQMLRDPILKAKELAAEADSEEKLKLFMQIFDIEEEAGRQLDKSLDNRQTVHSFQKAEAKTGLRPLVSE.

Substrate is bound by residues 49–52 (TCNR), Ser-109, 114–116 (ETQ), and Gln-120. Cys-50 (nucleophile) is an active-site residue. 189-194 (GAGKMG) lines the NADP(+) pocket.

It belongs to the glutamyl-tRNA reductase family. Homodimer.

It catalyses the reaction (S)-4-amino-5-oxopentanoate + tRNA(Glu) + NADP(+) = L-glutamyl-tRNA(Glu) + NADPH + H(+). It participates in porphyrin-containing compound metabolism; protoporphyrin-IX biosynthesis; 5-aminolevulinate from L-glutamyl-tRNA(Glu): step 1/2. In terms of biological role, catalyzes the NADPH-dependent reduction of glutamyl-tRNA(Glu) to glutamate 1-semialdehyde (GSA). In Bacillus velezensis (strain DSM 23117 / BGSC 10A6 / LMG 26770 / FZB42) (Bacillus amyloliquefaciens subsp. plantarum), this protein is Glutamyl-tRNA reductase.